Reading from the N-terminus, the 384-residue chain is MKFCSLFHVLSFCCTLAYAVPKSQFLQLHSLSNAIPVEWKWYGSVDEDSGYVYLTSKDSNEARSGSLWSTSVLRQVGWQLSTSFVAHVSENENTFFAIWYTSAVGSEGPVFGASDKWDGLLISQEIDQTGKIFVRGYLNDKSFELAQFTDPDLPPFAKCTIESSPEALNNIILKYGDQSGLELFVNDKPCFQVKDVILPQGYYFGVSSQSTSAKDLVALSNLNILPPDTSNNENLNPTSNTKQSVGDNTSPQTVIDTEGLNAIKADLAKLFNLVESQRQKMDSLHFALTNALERLNDISSTSQFPSERFNALEKLLHDSLSAQSSTADGTSKHLAEFEKEIKKAMGNAYSPYNLTNFMVFLLLGAIVSYGIMLVRRDRRRHKYL.

Positions 1–19 (MKFCSLFHVLSFCCTLAYA) are cleaved as a signal peptide. One can recognise an L-type lectin-like domain in the interval 20–224 (VPKSQFLQLH…DLVALSNLNI (205 aa)). Over 20–353 (VPKSQFLQLH…AMGNAYSPYN (334 aa)) the chain is Extracellular. The segment at 227–251 (PDTSNNENLNPTSNTKQSVGDNTSP) is disordered. Residues 354 to 374 (LTNFMVFLLLGAIVSYGIMLV) form a helical membrane-spanning segment. The Cytoplasmic segment spans residues 375 to 384 (RRDRRRHKYL).

Its subcellular location is the membrane. The protein localises to the endoplasmic reticulum. It is found in the golgi apparatus. In Schizosaccharomyces pombe (strain 972 / ATCC 24843) (Fission yeast), this protein is L-type lectin-like domain-containing protein C4F6.05c.